Reading from the N-terminus, the 246-residue chain is Probable transcriptional regulatory protein CLL_A1008 (246 aa).

It belongs to the TACO1 family.

It is found in the cytoplasm. In Clostridium botulinum (strain Eklund 17B / Type B), this protein is Probable transcriptional regulatory protein CLL_A1008.